Consider the following 213-residue polypeptide: 3-isopropylmalate dehydratase small subunit (213 aa).

It belongs to the LeuD family. LeuD type 1 subfamily. Heterodimer of LeuC and LeuD.

The catalysed reaction is (2R,3S)-3-isopropylmalate = (2S)-2-isopropylmalate. It participates in amino-acid biosynthesis; L-leucine biosynthesis; L-leucine from 3-methyl-2-oxobutanoate: step 2/4. In terms of biological role, catalyzes the isomerization between 2-isopropylmalate and 3-isopropylmalate, via the formation of 2-isopropylmaleate. This is 3-isopropylmalate dehydratase small subunit from Neisseria meningitidis serogroup C / serotype 2a (strain ATCC 700532 / DSM 15464 / FAM18).